A 585-amino-acid polypeptide reads, in one-letter code: Frizzled-5 (585 aa).

Residues 1–26 (MARPDPSAPPSLLLLLLAQLVGRAAA) form the signal peptide. The Extracellular segment spans residues 27 to 238 (ASKAPVCQEI…ADERTFATFW (212 aa)). The region spanning 28 to 150 (SKAPVCQEIT…RDAEVLCMDY (123 aa)) is the FZ domain. 5 cysteine pairs are disulfide-bonded: Cys-33/Cys-94, Cys-41/Cys-87, Cys-78/Cys-116, Cys-105/Cys-147, and Cys-109/Cys-133. Asn-47 is a glycosylation site (N-linked (GlcNAc...) asparagine). An N-linked (GlcNAc...) asparagine glycan is attached at Asn-151. The tract at residues 156-179 (TTAPPRPFPAKPTLPGPPGAPASG) is disordered. Residues 159 to 175 (PPRPFPAKPTLPGPPGA) show a composition bias toward pro residues. A helical transmembrane segment spans residues 239-259 (IGLWSVLCFISTSTTVATFLI). The Cytoplasmic segment spans residues 260–270 (DMERFRYPERP). Residues 271–291 (IIFLSACYLCVSLGFLVRLVV) form a helical membrane-spanning segment. Residues 292 to 315 (GHASVACSREHNHIHYETTGPALC) lie on the Extracellular side of the membrane. A helical transmembrane segment spans residues 316–336 (TIVFLLVYFFGMASSIWWVIL). The Cytoplasmic portion of the chain corresponds to 337 to 358 (SLTWFLAAGMKWGNEAIAGYAQ). A helical transmembrane segment spans residues 359 to 379 (YFHLAAWLIPSVKSITALALS). Over 380 to 402 (SVDGDPVAGICYVGNQNLNSLRG) the chain is Extracellular. The chain crosses the membrane as a helical span at residues 403–423 (FVLGPLVLYLLVGTLFLLAGF). Residues 424–449 (VSLFRIRSVIKQGGTKTDKLEKLMIR) are Cytoplasmic-facing. A helical transmembrane segment spans residues 450–470 (IGIFTLLYTVPASIVVACYLY). The Extracellular segment spans residues 471–500 (EQHYRESWEAALTCACPGHDTGQPRAKPEY). The helical transmembrane segment at 501-521 (WVLMLKYFMCLVVGITSGVWI) threads the bilayer. The Cytoplasmic segment spans residues 522-585 (WSGKTVESWR…YHKQVSLSHV (64 aa)). The Lys-Thr-X-X-X-Trp motif, mediates interaction with the PDZ domain of Dvl family members signature appears at 525 to 530 (KTVESW). The PDZ-binding signature appears at 583-585 (SHV).

Belongs to the G-protein coupled receptor Fz/Smo family. As to quaternary structure, binding of unsaturated fatty acid molecules (via FZ domain) promotes homodimerization. Interacts with WNT2B. Interacts with WNT3A. Interacts with WNT7A. Interacts with GOPC. In terms of processing, ubiquitinated by RNF43 and ZNRF3, leading to its degradation by the proteasome.

Its subcellular location is the cell membrane. It is found in the golgi apparatus membrane. The protein resides in the synapse. It localises to the perikaryon. The protein localises to the cell projection. Its subcellular location is the dendrite. It is found in the axon. In terms of biological role, receptor for Wnt proteins. Functions in the canonical Wnt/beta-catenin signaling pathway. In vitro activates WNT2, WNT10B, WNT5A, but not WNT2B or WNT4 signaling. In neurons, activation by WNT7A promotes formation of synapses. May be involved in transduction and intercellular transmission of polarity information during tissue morphogenesis and/or in differentiated tissues. Plays a role in yolk sac angiogenesis and in placental vascularization. Plays a role in ocular development. The polypeptide is Frizzled-5 (FZD5) (Homo sapiens (Human)).